Reading from the N-terminus, the 445-residue chain is Adenylosuccinate synthetase (445 aa).

Residues 12 to 18 and 40 to 42 each bind GTP; these read GDEGKGK and GHT. Asp13 serves as the catalytic Proton acceptor. 2 residues coordinate Mg(2+): Asp13 and Gly40. IMP contacts are provided by residues 13–16, 38–41, Thr128, Arg142, Gln223, Thr238, and Arg302; these read DEGK and NAGH. The Proton donor role is filled by His41. Substrate is bound at residue 298 to 304; sequence TTTGRKR. GTP-binding positions include Arg304, 330-332, and 411-413; these read KLD and SLG.

The protein belongs to the adenylosuccinate synthetase family. As to quaternary structure, homodimer. Requires Mg(2+) as cofactor.

The protein localises to the cytoplasm. The catalysed reaction is IMP + L-aspartate + GTP = N(6)-(1,2-dicarboxyethyl)-AMP + GDP + phosphate + 2 H(+). The protein operates within purine metabolism; AMP biosynthesis via de novo pathway; AMP from IMP: step 1/2. Functionally, plays an important role in the de novo pathway of purine nucleotide biosynthesis. Catalyzes the first committed step in the biosynthesis of AMP from IMP. This Cyanothece sp. (strain PCC 7425 / ATCC 29141) protein is Adenylosuccinate synthetase.